The primary structure comprises 316 residues: MSTVQVPKLNTKDLLTLEELTKEEIISLIEFAIYLKKNKQEPLLQGKILGLIFDKHSTRTRVSFEAGMVQLGGHGMFLSGKEMQMGRGETVSDTAKVLSQYIDGIMIRTFSHADVEELAKESSIPVINGLTDDHHPCQALADLMTIYEETNTFKGIKLAYVGDGNNVCHSLLLASAKVGMHMTVATPIGYEPNEEIVKKALAIAKETGAEIEILHNPELAVNEADFIYTDVWMSMGQEGEEEKYTLFQPYQINNELVKHAKQTYRFLHCLPAHREEEVTGEIIDGPKSIVFEQAGNRLHAQKALLVSLFKNVEELS.

Carbamoyl phosphate is bound by residues 57 to 60 (STRT), Gln84, Arg108, and 135 to 138 (HPCQ). L-ornithine contacts are provided by residues Asn166, Asp230, and 234-235 (SM). Carbamoyl phosphate is bound by residues 269–270 (CL) and Arg297.

It belongs to the aspartate/ornithine carbamoyltransferase superfamily. OTCase family.

The protein localises to the cytoplasm. The enzyme catalyses carbamoyl phosphate + L-ornithine = L-citrulline + phosphate + H(+). It functions in the pathway amino-acid degradation; L-arginine degradation via ADI pathway; carbamoyl phosphate from L-arginine: step 2/2. Reversibly catalyzes the transfer of the carbamoyl group from carbamoyl phosphate (CP) to the N(epsilon) atom of ornithine (ORN) to produce L-citrulline. In Bacillus cereus (strain AH187), this protein is Ornithine carbamoyltransferase.